The following is a 359-amino-acid chain: DNA polymerase IV (359 aa).

A UmuC domain is found at 4-185 (IIHIDMDCYF…LPLSKIPGVG (182 aa)). The Mg(2+) site is built by Asp8 and Asp103. Residue Glu104 is part of the active site.

This sequence belongs to the DNA polymerase type-Y family. In terms of assembly, monomer. It depends on Mg(2+) as a cofactor.

It localises to the cytoplasm. The catalysed reaction is DNA(n) + a 2'-deoxyribonucleoside 5'-triphosphate = DNA(n+1) + diphosphate. Poorly processive, error-prone DNA polymerase involved in untargeted mutagenesis. Copies undamaged DNA at stalled replication forks, which arise in vivo from mismatched or misaligned primer ends. These misaligned primers can be extended by PolIV. Exhibits no 3'-5' exonuclease (proofreading) activity. May be involved in translesional synthesis, in conjunction with the beta clamp from PolIII. In Shewanella frigidimarina (strain NCIMB 400), this protein is DNA polymerase IV.